Here is a 126-residue protein sequence, read N- to C-terminus: Large ribosomal subunit protein bL12 (126 aa).

This sequence belongs to the bacterial ribosomal protein bL12 family. As to quaternary structure, homodimer. Part of the ribosomal stalk of the 50S ribosomal subunit. Forms a multimeric L10(L12)X complex, where L10 forms an elongated spine to which 2 to 4 L12 dimers bind in a sequential fashion. Binds GTP-bound translation factors.

In terms of biological role, forms part of the ribosomal stalk which helps the ribosome interact with GTP-bound translation factors. Is thus essential for accurate translation. This Methylorubrum populi (strain ATCC BAA-705 / NCIMB 13946 / BJ001) (Methylobacterium populi) protein is Large ribosomal subunit protein bL12.